The sequence spans 329 residues: Peroxidase 51 (329 aa).

A signal peptide spans methionine 1–alanine 25. Cystine bridges form between cysteine 36–cysteine 119, cysteine 69–cysteine 74, cysteine 125–cysteine 325, and cysteine 204–cysteine 236. The active-site Proton acceptor is histidine 67. Ca(2+) contacts are provided by aspartate 68, valine 71, glycine 73, aspartate 75, and serine 77. Proline 167 is a substrate binding site. Heme b is bound at residue histidine 197. Threonine 198 lines the Ca(2+) pocket. N-linked (GlcNAc...) asparagine glycosylation occurs at asparagine 215. Positions 249, 252, and 257 each coordinate Ca(2+).

It belongs to the peroxidase family. Classical plant (class III) peroxidase subfamily. Heme b serves as cofactor. Ca(2+) is required as a cofactor.

Its subcellular location is the secreted. The catalysed reaction is 2 a phenolic donor + H2O2 = 2 a phenolic radical donor + 2 H2O. Removal of H(2)O(2), oxidation of toxic reductants, biosynthesis and degradation of lignin, suberization, auxin catabolism, response to environmental stresses such as wounding, pathogen attack and oxidative stress. These functions might be dependent on each isozyme/isoform in each plant tissue. This chain is Peroxidase 51 (PER51), found in Arabidopsis thaliana (Mouse-ear cress).